We begin with the raw amino-acid sequence, 135 residues long: Lysozyme 2 (135 aa).

A signal peptide spans 1–18 (MNFLILFCVVASASVVYS). The I-type lysozyme domain occupies 19–135 (SISDQCLRCI…WRLVQAKGCS (117 aa)). 6 cysteine pairs are disulfide-bonded: C24/C100, C29/C35, C40/C49, C62/C82, C72/C78, and C96/C114. E32 (proton donor) is an active-site residue. The active-site Nucleophile is D43. 55-61 (KQGYWTD) contacts substrate. Substrate contacts are provided by residues Y86 and 107 to 109 (HNG).

As to expression, expressed in the epithelia of the basophil cells in the digestive tubules, but not in the epithelial cells lining the digestive ducts and stomach. Expressed at a much lower level in the style sac-midgut tissues. No expression detected in mantle, gills, labial palps or hemocytes.

The protein resides in the secreted. The catalysed reaction is Hydrolysis of (1-&gt;4)-beta-linkages between N-acetylmuramic acid and N-acetyl-D-glucosamine residues in a peptidoglycan and between N-acetyl-D-glucosamine residues in chitodextrins.. Activity decreased by 80% by addition of 0.01 M calcium, zinc or magnesium. Activity only decreased by 17% by addition of ammonium, and by 2% by addition of sodium. The main role of this lysozyme is in digestion. Has antibacterial activity against the Gram-positive bacterium P.cerevisiae and the Gram-negative bacteria E.coli and V.vulnificus. Shows some chitinase activity but no isopeptidase activity. This is Lysozyme 2 from Crassostrea virginica (Eastern oyster).